The primary structure comprises 130 residues: Fluoride-specific ion channel FluC (130 aa).

The next 4 membrane-spanning stretches (helical) occupy residues 3-23 (LVFL…YFVG), 38-58 (LGTF…GHLA), 67-87 (FGIF…SYGL), and 102-122 (ISYV…GWFL). Na(+) contacts are provided by G77 and T80.

It belongs to the fluoride channel Fluc/FEX (TC 1.A.43) family.

The protein resides in the cell inner membrane. The catalysed reaction is fluoride(in) = fluoride(out). Na(+) is not transported, but it plays an essential structural role and its presence is essential for fluoride channel function. In terms of biological role, fluoride-specific ion channel. Important for reducing fluoride concentration in the cell, thus reducing its toxicity. The protein is Fluoride-specific ion channel FluC of Helicobacter pylori (strain J99 / ATCC 700824) (Campylobacter pylori J99).